Here is a 292-residue protein sequence, read N- to C-terminus: Large ribosomal subunit protein bL19m (292 aa).

The tract at residues 39-68 is disordered; that stretch reads GPGRRQITGPSEPGVFQPPPKPVIVDKRGP. The residue at position 77 (serine 77) is a Phosphoserine.

It belongs to the bacterial ribosomal protein bL19 family. Component of the mitochondrial ribosome large subunit (39S) which comprises a 16S rRNA and about 50 distinct proteins.

It localises to the mitochondrion. This Bos taurus (Bovine) protein is Large ribosomal subunit protein bL19m (MRPL19).